The sequence spans 153 residues: Riboflavin synthase (153 aa).

This sequence belongs to the DMRL synthase family. As to quaternary structure, homooligomer. Mg(2+) is required as a cofactor.

The catalysed reaction is 2 6,7-dimethyl-8-(1-D-ribityl)lumazine + H(+) = 5-amino-6-(D-ribitylamino)uracil + riboflavin. It participates in cofactor biosynthesis; riboflavin biosynthesis; riboflavin from 2-hydroxy-3-oxobutyl phosphate and 5-amino-6-(D-ribitylamino)uracil: step 2/2. Its activity is regulated as follows. Inhibited by EDTA. This chain is Riboflavin synthase (ribC), found in Methanothermobacter thermautotrophicus (strain ATCC 29096 / DSM 1053 / JCM 10044 / NBRC 100330 / Delta H) (Methanobacterium thermoautotrophicum).